A 180-amino-acid chain; its full sequence is Large ribosomal subunit protein uL6c (180 aa).

The protein belongs to the universal ribosomal protein uL6 family. Part of the 50S ribosomal subunit.

It is found in the plastid. It localises to the chloroplast. Binds 23S rRNA. The protein is Large ribosomal subunit protein uL6c (rpl6) of Porphyra purpurea (Red seaweed).